A 609-amino-acid chain; its full sequence is Alpha-glycerophosphate oxidase (609 aa).

21 to 49 (DVLIIGGGITGAGVAVQTAAAGMKTVLLE) contacts FAD.

It depends on FAD as a cofactor.

The protein localises to the cytoplasm. The catalysed reaction is sn-glycerol 3-phosphate + O2 = dihydroxyacetone phosphate + H2O2. It participates in membrane lipid metabolism; glycerophospholipid metabolism. The protein is Alpha-glycerophosphate oxidase (glpO) of Enterococcus casseliflavus (Enterococcus flavescens).